A 230-amino-acid chain; its full sequence is Large ribosomal subunit protein uL1 (230 aa).

Belongs to the universal ribosomal protein uL1 family. As to quaternary structure, part of the 50S ribosomal subunit.

Functionally, binds directly to 23S rRNA. The L1 stalk is quite mobile in the ribosome, and is involved in E site tRNA release. Protein L1 is also a translational repressor protein, it controls the translation of the L11 operon by binding to its mRNA. The polypeptide is Large ribosomal subunit protein uL1 (Acidithiobacillus ferrooxidans (strain ATCC 53993 / BNL-5-31) (Leptospirillum ferrooxidans (ATCC 53993))).